Consider the following 147-residue polypeptide: 3-dehydroquinate dehydratase (147 aa).

Tyr-23 functions as the Proton acceptor in the catalytic mechanism. Substrate contacts are provided by Asn-74, His-80, and Asp-87. The active-site Proton donor is His-100. Residues 101–102 (IS) and Arg-111 each bind substrate.

The protein belongs to the type-II 3-dehydroquinase family. In terms of assembly, homododecamer.

The enzyme catalyses 3-dehydroquinate = 3-dehydroshikimate + H2O. The protein operates within metabolic intermediate biosynthesis; chorismate biosynthesis; chorismate from D-erythrose 4-phosphate and phosphoenolpyruvate: step 3/7. Its function is as follows. Catalyzes a trans-dehydration via an enolate intermediate. In Bacillus pumilus (strain SAFR-032), this protein is 3-dehydroquinate dehydratase.